We begin with the raw amino-acid sequence, 290 residues long: ATP synthase gamma chain (290 aa).

It belongs to the ATPase gamma chain family. As to quaternary structure, F-type ATPases have 2 components, CF(1) - the catalytic core - and CF(0) - the membrane proton channel. CF(1) has five subunits: alpha(3), beta(3), gamma(1), delta(1), epsilon(1). CF(0) has three main subunits: a, b and c.

It is found in the cell inner membrane. Its function is as follows. Produces ATP from ADP in the presence of a proton gradient across the membrane. The gamma chain is believed to be important in regulating ATPase activity and the flow of protons through the CF(0) complex. The protein is ATP synthase gamma chain of Dictyoglomus thermophilum (strain ATCC 35947 / DSM 3960 / H-6-12).